Here is a 90-residue protein sequence, read N- to C-terminus: Small ribosomal subunit protein uS15c (90 aa).

The protein belongs to the universal ribosomal protein uS15 family. Part of the 30S ribosomal subunit.

Its subcellular location is the plastid. It is found in the chloroplast. This Secale cereale (Rye) protein is Small ribosomal subunit protein uS15c (rps15).